Here is a 198-residue protein sequence, read N- to C-terminus: Protein hunchback (198 aa).

Disordered stretches follow at residues Ser-16–Leu-111 and Asn-152–Ala-198. Basic residues predominate over residues His-17 to His-31. 2 stretches are compositionally biased toward low complexity: residues Ser-35–Gln-46 and Ser-56–Gln-83. The segment covering Pro-95–Pro-105 has biased composition (polar residues). Residues Glu-179–Ala-198 are compositionally biased toward basic and acidic residues.

This sequence belongs to the hunchback C2H2-type zinc-finger protein family.

It localises to the nucleus. In terms of biological role, gap class segmentation protein that controls development of head structures. The polypeptide is Protein hunchback (hb) (Drosophila lineosetae (Fruit fly)).